The primary structure comprises 188 residues: Oleosin S2-2 (188 aa).

Position 2 is an N-acetylalanine (Ala-2). Residues 2 to 51 (ATVERRVQVDPTDKRIHLQPQYEGDVGYGYGYGGRADYKSSGPSSNQIVA) form a polar region. The next 3 membrane-spanning stretches (helical) occupy residues 49 to 69 (IVAL…AGLT), 74 to 94 (VIGL…IVPA), and 96 to 116 (ITIG…LTGL). The tract at residues 52-125 (LIVGVPVGGS…LSSVSWVLNY (74 aa)) is hydrophobic. The interval 164–188 (DKAHEAHDTSLTTETTEPGKTRRHT) is disordered. Over residues 172 to 181 (TSLTTETTEP) the composition is skewed to polar residues.

This sequence belongs to the oleosin family.

The protein localises to the lipid droplet. It is found in the membrane. May have a structural role to stabilize the lipid body during desiccation of the seed by preventing coalescence of the oil. Probably interacts with both lipid and phospholipid moieties of lipid bodies. May also provide recognition signals for specific lipase anchorage in lipolysis during seedling growth. This chain is Oleosin S2-2 (S2), found in Brassica napus (Rape).